A 166-amino-acid polypeptide reads, in one-letter code: UPF0336 protein ML2425 (166 aa).

A MaoC-like domain is found at 10–131; it reads LIGKHYRQLD…VIAEVRSEVT (122 aa).

The protein belongs to the UPF0336 family.

In Mycobacterium leprae (strain TN), this protein is UPF0336 protein ML2425.